The following is a 296-amino-acid chain: Small ribosomal subunit biogenesis GTPase RsgA (296 aa).

A CP-type G domain is found at 63-224; sequence RNQLVRPPVA…IADTPGFSSY (162 aa). GTP-binding positions include 112–115 and 167–175; these read SKTD and GQTGAGKST. Zn(2+) is bound by residues C248, C253, H255, and C261.

This sequence belongs to the TRAFAC class YlqF/YawG GTPase family. RsgA subfamily. In terms of assembly, monomer. Associates with 30S ribosomal subunit, binds 16S rRNA. The cofactor is Zn(2+).

It localises to the cytoplasm. In terms of biological role, one of several proteins that assist in the late maturation steps of the functional core of the 30S ribosomal subunit. Helps release RbfA from mature subunits. May play a role in the assembly of ribosomal proteins into the subunit. Circularly permuted GTPase that catalyzes slow GTP hydrolysis, GTPase activity is stimulated by the 30S ribosomal subunit. This is Small ribosomal subunit biogenesis GTPase RsgA from Limosilactobacillus reuteri (strain DSM 20016) (Lactobacillus reuteri).